Reading from the N-terminus, the 119-residue chain is NADH-quinone oxidoreductase subunit A (119 aa).

3 helical membrane-spanning segments follow: residues 7-27 (FPVLLFILVGIGVGLVPMFLG), 63-83 (LIAILFILFDLETAFLFPWGV), and 88-108 (IGWFGYASMVIFLLEFIVGFV).

It belongs to the complex I subunit 3 family. As to quaternary structure, NDH-1 is composed of 14 different subunits. Subunits NuoA, H, J, K, L, M, N constitute the membrane sector of the complex.

Its subcellular location is the cell membrane. The enzyme catalyses a quinone + NADH + 5 H(+)(in) = a quinol + NAD(+) + 4 H(+)(out). NDH-1 shuttles electrons from NADH, via FMN and iron-sulfur (Fe-S) centers, to quinones in the respiratory chain. The immediate electron acceptor for the enzyme in this species is believed to be ubiquinone. Couples the redox reaction to proton translocation (for every two electrons transferred, four hydrogen ions are translocated across the cytoplasmic membrane), and thus conserves the redox energy in a proton gradient. The polypeptide is NADH-quinone oxidoreductase subunit A (Polynucleobacter asymbioticus (strain DSM 18221 / CIP 109841 / QLW-P1DMWA-1) (Polynucleobacter necessarius subsp. asymbioticus)).